The chain runs to 665 residues: Fructose-1,6-bisphosphatase class 3 (665 aa).

Belongs to the FBPase class 3 family. Mn(2+) is required as a cofactor.

The enzyme catalyses beta-D-fructose 1,6-bisphosphate + H2O = beta-D-fructose 6-phosphate + phosphate. Its pathway is carbohydrate biosynthesis; gluconeogenesis. The sequence is that of Fructose-1,6-bisphosphatase class 3 from Clostridium novyi (strain NT).